Here is a 108-residue protein sequence, read N- to C-terminus: uncharacterized protein (108 aa).

The protein belongs to the UPF0440 family.

This is an uncharacterized protein from Thermococcus kodakarensis (strain ATCC BAA-918 / JCM 12380 / KOD1) (Pyrococcus kodakaraensis (strain KOD1)).